A 121-amino-acid chain; its full sequence is Ribonuclease P protein component (121 aa).

It belongs to the RnpA family. As to quaternary structure, consists of a catalytic RNA component (M1 or rnpB) and a protein subunit.

It carries out the reaction Endonucleolytic cleavage of RNA, removing 5'-extranucleotides from tRNA precursor.. RNaseP catalyzes the removal of the 5'-leader sequence from pre-tRNA to produce the mature 5'-terminus. It can also cleave other RNA substrates such as 4.5S RNA. The protein component plays an auxiliary but essential role in vivo by binding to the 5'-leader sequence and broadening the substrate specificity of the ribozyme. This chain is Ribonuclease P protein component, found in Oceanobacillus iheyensis (strain DSM 14371 / CIP 107618 / JCM 11309 / KCTC 3954 / HTE831).